A 538-amino-acid chain; its full sequence is MSTSSSSRIAIEQNNKCVNSVAAALCPLSNCQFSGVVISAISDEQKLEFNSIYKSSCTLSCSYDSQGVLLRIMLDNDQGHVLKEYMISADTDAAQLGRRCYAVSLESDNLVLRFGSDKDQQLFRKVVENVKHLRPKSVFSQRTEESSASQYFQFYGYLSQQQNMMQDYVRTSTYQRAILGNSIDFQDKIVLDVGAGSGILSFFAVQAGAAKVYAIEASNMAQYAQQLVESNNVQHKISVIPGKIEEIELPEKVDVIISEPMGYMLYNERMLETYLHARKWLKPHGKMYPTHGDLHIAPFSDESLYSEQYNKANFWYQSAFHGVDLTTLHKEGMKEYFRQPIVDTFDIRICMAKSVRHVCDFLNDKEDDLHVIDIPLEFHILQTGICHGLAFWFDVEFSGSSQNVWLSTSPTAPLTHWYQVRCLLPMPIFIKQGQTLTGRVLLEANRRQSYDVTIDLHIEGTLISSSNTLDLKNPYFRYTGAPVQAPPGTNTQSPSEQYWTQMDTQGNRNSNSMLNGALTVNGMGDGGMDITHGLMHPH.

An SAM-dependent MTase PRMT-type domain is found at 148-457 (ASQYFQFYGY…QSYDVTIDLH (310 aa)). Q161, R170, G194, E216, E245, and T273 together coordinate S-adenosyl-L-methionine. R508 carries the post-translational modification Asymmetric dimethylarginine; by autocatalysis.

It belongs to the class I-like SAM-binding methyltransferase superfamily. Protein arginine N-methyltransferase family. As to quaternary structure, homodimer. The dimethylated protein is the major form.

Its subcellular location is the cytoplasm. It localises to the nucleus. It catalyses the reaction L-arginyl-[protein] + 2 S-adenosyl-L-methionine = N(omega),N(omega)-dimethyl-L-arginyl-[protein] + 2 S-adenosyl-L-homocysteine + 2 H(+). Methylates (mono- and asymmetric dimethylation) the guanidino nitrogens of arginyl residues in proteins. May methylate histone H3 at 'Arg-17' and activate transcription via chromatin remodeling. The chain is Histone-arginine methyltransferase CARMER (Art4) from Drosophila virilis (Fruit fly).